The sequence spans 131 residues: UPF0102 protein Ent638_3585 (131 aa).

The segment at 1 to 20 is disordered; the sequence is MAQIPAGADRPGKLSRKQTG.

Belongs to the UPF0102 family.

The protein is UPF0102 protein Ent638_3585 of Enterobacter sp. (strain 638).